Consider the following 681-residue polypeptide: Proline dehydrogenase 1, mitochondrial (681 aa).

A mitochondrion-targeting transit peptide spans 1–30 (MALLRSLSAQRTAISLVYGRNSSKSSNSVA). The segment covering 76 to 87 (STLVQPEVVSSE) has biased composition (polar residues). Disordered stretches follow at residues 76 to 113 (STLV…QRDP) and 216 to 239 (EEAE…EGSM). A compositionally biased stretch (basic and acidic residues) spans 88–99 (TVKRSMKQESSQ).

This sequence belongs to the proline oxidase family. Requires FAD as cofactor. Most abundant in developing nervous system.

The protein localises to the mitochondrion matrix. The enzyme catalyses L-proline + a quinone = (S)-1-pyrroline-5-carboxylate + a quinol + H(+). It participates in amino-acid degradation; L-proline degradation into L-glutamate; L-glutamate from L-proline: step 1/2. In terms of biological role, converts proline to delta-1-pyrroline-5-carboxylate. Involved in the conversion of proline to glutamate, which functions as a transmitter at neuromuscular junctions. Glutamate deficiency could possibly account for reduced motor activity. The chain is Proline dehydrogenase 1, mitochondrial (slgA) from Drosophila melanogaster (Fruit fly).